The primary structure comprises 153 residues: Probable ubiquitin-conjugating enzyme E2 C (153 aa).

The 148-residue stretch at 6–153 (SVSKRLQSEL…KRYQEATSRP (148 aa)) folds into the UBC core domain. Catalysis depends on cysteine 90, which acts as the Glycyl thioester intermediate.

This sequence belongs to the ubiquitin-conjugating enzyme family. As to quaternary structure, component of the APC/C complex. Autoubiquitinated by the APC/C complex, leading to its degradation by the proteasome.

It catalyses the reaction S-ubiquitinyl-[E1 ubiquitin-activating enzyme]-L-cysteine + [E2 ubiquitin-conjugating enzyme]-L-cysteine = [E1 ubiquitin-activating enzyme]-L-cysteine + S-ubiquitinyl-[E2 ubiquitin-conjugating enzyme]-L-cysteine.. Its pathway is protein modification; protein ubiquitination. Functionally, catalyzes the covalent attachment of ubiquitin to other proteins. Acts as an essential factor of the anaphase promoting complex/cyclosome (APC/C), a cell cycle-regulated ubiquitin ligase that controls progression through mitosis. Acts by initiating polyubiquitin chains on APC/C substrates, leading to the degradation of APC/C substrates by the proteasome and promoting mitotic exit. The polypeptide is Probable ubiquitin-conjugating enzyme E2 C (ube2c) (Dictyostelium discoideum (Social amoeba)).